Reading from the N-terminus, the 456-residue chain is GTPase Der (456 aa).

2 consecutive EngA-type G domains span residues 2–167 (LKVA…DQFG) and 176–351 (ATFC…AQLK). GTP is bound by residues 8-15 (GKPNVGKS), 55-59 (DTGGL), 118-121 (NKIE), 182-189 (GKPNVGKS), 229-233 (DTAGI), and 294-297 (NKWD). The region spanning 352-436 (IKISTSLLND…PITLYFKSKN (85 aa)) is the KH-like domain.

This sequence belongs to the TRAFAC class TrmE-Era-EngA-EngB-Septin-like GTPase superfamily. EngA (Der) GTPase family. Associates with the 50S ribosomal subunit.

Its function is as follows. GTPase that plays an essential role in the late steps of ribosome biogenesis. The sequence is that of GTPase Der from Mycoplasmoides gallisepticum (strain R(low / passage 15 / clone 2)) (Mycoplasma gallisepticum).